The primary structure comprises 187 residues: Intraflagellar transport protein 22 homolog (187 aa).

GTP contacts are provided by residues 10-17 (GPSECGKT), 65-69 (DCAGD), and 125-128 (HKPG).

This sequence belongs to the small GTPase superfamily. Rab family.

The chain is Intraflagellar transport protein 22 homolog (ift22) from Danio rerio (Zebrafish).